A 337-amino-acid polypeptide reads, in one-letter code: Probable E3 ubiquitin-protein ligase LUL1 (337 aa).

Residue Gly-2 is the site of N-myristoyl glycine attachment. Residues 139 to 255 (FTFDASMPGR…GEIKIEVVKQ (117 aa)) are DAR2 domain. An RING-type; atypical zinc finger spans residues 285 to 324 (CVVCLSEPRDTTVLPCRHMCMCSGCAKALRFQTNLCPVCR).

Belongs to the RING-type zinc finger family. LOG2 subfamily. In terms of processing, myristoylated (in vitro).

It carries out the reaction S-ubiquitinyl-[E2 ubiquitin-conjugating enzyme]-L-cysteine + [acceptor protein]-L-lysine = [E2 ubiquitin-conjugating enzyme]-L-cysteine + N(6)-ubiquitinyl-[acceptor protein]-L-lysine.. Its pathway is protein modification; protein ubiquitination. Its function is as follows. Acts as an E3 ubiquitin-protein ligase, or as part of E3 complex, which accepts ubiquitin from specific E2 ubiquitin-conjugating enzymes and then transfers it to substrates (in vitro). The polypeptide is Probable E3 ubiquitin-protein ligase LUL1 (LUL1) (Arabidopsis thaliana (Mouse-ear cress)).